A 514-amino-acid polypeptide reads, in one-letter code: MTRRALISVSDKTGIEAFARALVERGWELLSTGGTLAALRAAGIPATAVSDVTGFPEILDGRVKTLHPAIHGGILARREEGHLAQLAEHGLDLIDLVCVNLYPFRETVARGATFEEAIENIDIGGPAMIRAAAKNHAGVLVLVDPADYGLAFQDEVSQTDRRRLAAKAFRHTSDYDAAISTYLAGADEAGETLPEHLTLDLSRIAAVRYGENPHQPGAIYRLGTERGPVLDARLLSGKPMSFNNYADADAAWALAQELAAQEDQPPGTRAVCVAVKHANPCGVAVADSVQAAWEQARDADTLSVFGGVVAVSRPVDLAAAQSMRGTFLEVLIAPDVTPEAVAWFAAKKPDLRVLVADTAAHPGTLDVRPLAGGFAVQRRDTRPWDDLCPEVVTVRPPTEQEWGDLRFAWAVVKHARSNAVVLAKNGVTVGLGAGAVSRIWAAERAVQNAGERARGAVLASEAFFPFDDVVRLAAEAGVTAVLQPGGAKRDPEVIAAANELGLSMVFTGSRHFRH.

Residues 1-143 enclose the MGS-like domain; that stretch reads MTRRALISVS…KNHAGVLVLV (143 aa).

It belongs to the PurH family.

It carries out the reaction (6R)-10-formyltetrahydrofolate + 5-amino-1-(5-phospho-beta-D-ribosyl)imidazole-4-carboxamide = 5-formamido-1-(5-phospho-D-ribosyl)imidazole-4-carboxamide + (6S)-5,6,7,8-tetrahydrofolate. The enzyme catalyses IMP + H2O = 5-formamido-1-(5-phospho-D-ribosyl)imidazole-4-carboxamide. It functions in the pathway purine metabolism; IMP biosynthesis via de novo pathway; 5-formamido-1-(5-phospho-D-ribosyl)imidazole-4-carboxamide from 5-amino-1-(5-phospho-D-ribosyl)imidazole-4-carboxamide (10-formyl THF route): step 1/1. It participates in purine metabolism; IMP biosynthesis via de novo pathway; IMP from 5-formamido-1-(5-phospho-D-ribosyl)imidazole-4-carboxamide: step 1/1. The sequence is that of Bifunctional purine biosynthesis protein PurH from Deinococcus geothermalis (strain DSM 11300 / CIP 105573 / AG-3a).